A 467-amino-acid polypeptide reads, in one-letter code: Cytochrome c-552 (467 aa).

The first 27 residues, 1–27, serve as a signal peptide directing secretion; it reads MVKKLTGKSFALSALVAASFVAAGAMA. Heme c is bound at residue His87. Residues Cys115, Cys118, and Lys119 each coordinate heme. Cys153, Cys156, His157, Cys195, Cys198, and His199 together coordinate heme c. The Ca(2+) site is built by Glu201, Tyr202, Lys250, and Gln252. Tyr202 contributes to the substrate binding site. Residue His253 participates in substrate binding. Residues His264, Cys271, Cys274, His275, His290, Cys303, Cys306, His307, and His382 each contribute to the heme c site.

This sequence belongs to the cytochrome c-552 family. Ca(2+) serves as cofactor. The cofactor is heme c.

The protein resides in the periplasm. It carries out the reaction 6 Fe(III)-[cytochrome c] + NH4(+) + 2 H2O = 6 Fe(II)-[cytochrome c] + nitrite + 8 H(+). Its pathway is nitrogen metabolism; nitrate reduction (assimilation). Functionally, catalyzes the reduction of nitrite to ammonia, consuming six electrons in the process. The polypeptide is Cytochrome c-552 (Shewanella amazonensis (strain ATCC BAA-1098 / SB2B)).